Reading from the N-terminus, the 245-residue chain is AA9 family lytic polysaccharide monooxygenase B (245 aa).

The N-terminal stretch at 1 to 18 (MKSAIFAAAVLGAAGVSA) is a signal peptide. The Cu(2+) site is built by His-19 and His-105. Cys-116 and Cys-120 are joined by a disulfide. O2 contacts are provided by His-179 and Gln-188. Tyr-190 is a Cu(2+) binding site.

It belongs to the polysaccharide monooxygenase AA9 family. The cofactor is Cu(2+).

The protein resides in the secreted. It carries out the reaction [(1-&gt;4)-beta-D-glucosyl]n+m + reduced acceptor + O2 = 4-dehydro-beta-D-glucosyl-[(1-&gt;4)-beta-D-glucosyl]n-1 + [(1-&gt;4)-beta-D-glucosyl]m + acceptor + H2O.. Functionally, lytic polysaccharide monooxygenase (LPMO) that depolymerizes crystalline and amorphous polysaccharides via the oxidation of scissile alpha- or beta-(1-4)-glycosidic bonds, yielding C1 or C4 oxidation products. Catalysis by LPMOs requires the reduction of the active-site copper from Cu(II) to Cu(I) by a reducing agent and H(2)O(2) or O(2) as a cosubstrate. Active on hemicelluloses, including xylan, glucomannan, and xyloglucan. Has no activity on ivory nut mannan (INM), a linear beta-1,4-linked mannan without substitutions. The polypeptide is AA9 family lytic polysaccharide monooxygenase B (Malbranchea cinnamomea (Thermophilic fungus)).